The primary structure comprises 782 residues: Coiled-coil alpha-helical rod protein 1 (782 aa).

Composition is skewed to basic and acidic residues over residues 62–74 (ERDV…EPGR) and 208–218 (ETRRAGEAKEL). Disordered regions lie at residues 62-82 (ERDV…WGLE) and 185-218 (AHKE…AKEL). Coiled-coil stretches lie at residues 82-314 (EGSQ…ELTR), 344-398 (LMVQ…EVER), and 498-691 (VTDV…QQEG).

Its subcellular location is the cytoplasm. The protein resides in the nucleus. Functionally, may be a regulator of keratinocyte proliferation or differentiation. The polypeptide is Coiled-coil alpha-helical rod protein 1 (CCHCR1) (Gorilla gorilla gorilla (Western lowland gorilla)).